A 634-amino-acid chain; its full sequence is (-)-limonene synthase, chloroplastic (634 aa).

Residues 1–21 (MSPVSAIPLAYKLCLPRSLIS) constitute a chloroplast transit peptide. Positions 348, 385, 389, 526, and 529 each coordinate (2E)-geranyl diphosphate. 2 residues coordinate Mg(2+): Asp-385 and Asp-389. Residues 385-389 (DDIYD) carry the DDXXD motif motif. Positions 529 and 537 each coordinate Mg(2+).

It belongs to the terpene synthase family. Tpsb subfamily. As to quaternary structure, monomer. Requires Mg(2+) as cofactor. It depends on Mn(2+) as a cofactor.

Its subcellular location is the plastid. The protein localises to the chloroplast. The enzyme catalyses (2E)-geranyl diphosphate = (4S)-limonene + diphosphate. The protein operates within secondary metabolite biosynthesis; terpenoid biosynthesis. It participates in terpene metabolism; oleoresin biosynthesis. Its function is as follows. Monoterpene synthase (mono-TPS) involved in the biosynthesis of monoterpene natural products. Catalyzes the conversion of (2E)-geranyl diphosphate (GPP) into (-)-limonene. Not able to use geranylgeranyl pyrophosphate (GGPP) and farnesyl pyrophosphate (FPP) as substrates. In Picea sitchensis (Sitka spruce), this protein is (-)-limonene synthase, chloroplastic.